The following is a 488-amino-acid chain: MSSRESASRRPDPLRVTIMQSPSAFSLTIGGHGVATSDYLPVLNPATRQPIGQCPVASEEHVEQARAAAGDAFAVWRQVPYGKRCEQLQALAGILEAHLDELAQLLTHEQGKPLADARGELAGAIAFCQCAGSLPLPEVVHEQSATRLSKTVREPLGVVVAIVPWNYPVSIAFVKPDRRVGCRKHADSQAGADHAADYLRIGELIRDALPAGVINVLAGNDDLGPWLTGHADVAKISFTGSSVTGRHVARSAAADLKRLTLELGGNDAAVVMADSLSDAVVERVFWSAFTNAGQICMATKRLYIHESIYEAFRDKLVAYAQNVVIGDGSQPGVTMGPLQNAKQFAKVMSLIDAVRQRGGRLIECGQMRGGDGYFLPITFVDLPDESAPEVVEEAFGPLLPLLKFRDVDEVIERVNAARTGWLAASGVVIGRSAHGLQQPSTRSVWSTTGCDHAVYSFGGMKASGYGAESGLEGLLEFTTQKTVIIQQQ.

Position 240 to 245 (240 to 245) interacts with NAD(+); that stretch reads GSSVTG. Residues glutamate 262 and cysteine 296 contribute to the active site.

It belongs to the aldehyde dehydrogenase family.

It carries out the reaction an aldehyde + NAD(+) + H2O = a carboxylate + NADH + 2 H(+). In terms of biological role, involved in an alpha-terpineol oxidation system. In Pseudomonas sp, this protein is Probable aldehyde dehydrogenase (terPE).